The primary structure comprises 912 residues: Nonsense-mediated mRNA decay factor SMG8 (912 aa).

A disordered region spans residues E565–Q630. A compositionally biased stretch (polar residues) spans T570–F602. A compositionally biased stretch (basic and acidic residues) spans M604–S614.

The protein belongs to the SMG8 family.

In terms of biological role, involved in nonsense-mediated decay (NMD) of mRNAs containing premature stop codons. Probable component of kinase complex containing SMG1 and recruited to stalled ribosomes. The polypeptide is Nonsense-mediated mRNA decay factor SMG8 (Culex quinquefasciatus (Southern house mosquito)).